The following is a 152-amino-acid chain: Ninjurin-1 (152 aa).

M1 bears the N-acetylmethionine mark. Residues 1–10 are compositionally biased toward acidic residues; the sequence is MDPGTEEYEL. A disordered region spans residues 1-30; it reads MDPGTEEYELNGDLRPGSPGSPDASPPRWG. Topologically, residues 1-78 are extracellular; the sequence is MDPGTEEYEL…EQGNEFAFFV (78 aa). The segment covering 16–27 has biased composition (low complexity); sequence PGSPGSPDASPP. Phosphoserine occurs at positions 18, 21, and 25. Residues 26 to 37 form an N-terminal adhesion motif region; the sequence is PPRWGLRNRPIN. Residues 40 to 69 are required to induce plasma membrane rupture; it reads HYANKKSAAESMLDIALLMANASQLKAVVE. The helix alpha1 stretch occupies residues 44 to 55; the sequence is KKSAAESMLDIA. Residues 58–74 form a helix alpha2 region; sequence MANASQLKAVVEQGNEF. N-linked (GlcNAc...) asparagine glycosylation occurs at N60. A helical membrane pass occupies residues 79–103; sequence PLVVLISISLVLQIGVGVLLIFLVK. Residues 104 to 113 lie on the Cytoplasmic side of the membrane; it reads YDLNNPAKHA. Residues 114-138 traverse the membrane as a helical segment; sequence KLDFLNNLATGLVFIIVVVNIFITA. Residues 139-152 are Extracellular-facing; the sequence is FGVQKPVMDVAPRQ.

This sequence belongs to the ninjurin family. Homodimer; in absence of death stimuli, forms an inactive homodimer. Homooligomer; in response to death stimuli, homooligomerizes into long, highly branched filaments and large, ring-shaped structures in the membrane. The topology shown in the entry corresponds to the activated form. Post-translationally, cleaved by MMP9 protease to generate the Secreted ninjurin-1 form. In terms of processing, N-linked glycosylation is required for homooligomerization.

The protein localises to the cell membrane. It localises to the synaptic cell membrane. The protein resides in the secreted. With respect to regulation, in response to death stimuli, homooligomerizes and disrupts membrane integrity by introducing the hydrophilic faces of alpha1 and alpha2 helices into the hydrophobic membrane. Homooligomerization and ability to mediate plasma membrane rupture is inhibited by glycine; it is unclear whether glycine directly or indirectly inhibits homooligomerization. In normal conditions, NINJ1 is autoinhibited via formation of a homodimer: in the inactive homodimer, the alpha1 and alpha2 helices (residues 44-74) form a single transmembrane region without a kink, in which hydrophilic faces of alpha1 and alpha2 helices are sequestered. Functionally, effector of various programmed cell death, such as pyroptosis and necroptosis, which mediates plasma membrane rupture (cytolysis). Oligomerizes in response to death stimuli and forms ring-like structures on the plasma membrane: acts by cutting and shedding membrane disks, like a cookie cutter, leading to membrane damage and loss that cannot be repaired by the cell. Plasma membrane rupture leads to release intracellular molecules named damage-associated molecular patterns (DAMPs) that propagate the inflammatory response. Mechanistically, mediates plasma membrane rupture by introducing hydrophilic faces of 2 alpha helices into the hydrophobic membrane. Induces plasma membrane rupture downstream of Gasdermin (GSDMA, GSDMB, GSDMC, GSDMD, or GSDME) or MLKL during pyroptosis or necroptosis, respectively. Acts as an effector of PANoptosis downstream of CASP1, CASP4, CASP8 and RIPK3. Also induces plasma membrane rupture in response to cell swelling caused by osmotic stress and ferroptosis downstream of lipid peroxidation. Acts as a regulator of Toll-like receptor 4 (TLR4) signaling triggered by lipopolysaccharide (LPS) during systemic inflammation; directly binds LPS. Involved in leukocyte migration during inflammation by promoting transendothelial migration of macrophages via homotypic binding. Promotes the migration of monocytes across the brain endothelium to central nervous system inflammatory lesions. Also acts as a homophilic transmembrane adhesion molecule involved in various processes such as axonal growth, cell chemotaxis and angiogenesis. Promotes cell adhesion by mediating homophilic interactions via its extracellular N-terminal adhesion motif (N-NAM). Involved in the progression of the inflammatory stress by promoting cell-to-cell interactions between immune cells and endothelial cells. Plays a role in nerve regeneration by promoting maturation of Schwann cells. Acts as a regulator of angiogenesis. Promotes the formation of new vessels by mediating the interaction between capillary pericyte cells and endothelial cells. Promotes osteoclasts development by enhancing the survival of prefusion osteoclasts. Also involved in striated muscle growth and differentiation. In terms of biological role, secreted form generated by cleavage, which has chemotactic activity. Acts as an anti-inflammatory mediator by promoting monocyte recruitment, thereby ameliorating atherosclerosis. The sequence is that of Ninjurin-1 from Rattus norvegicus (Rat).